A 426-amino-acid chain; its full sequence is Serine--tRNA ligase (426 aa).

231–233 serves as a coordination point for L-serine; that stretch reads TSE. Position 262–264 (262–264) interacts with ATP; sequence RSE. Glu285 serves as a coordination point for L-serine. 349 to 352 lines the ATP pocket; sequence EISS. Ser385 lines the L-serine pocket.

Belongs to the class-II aminoacyl-tRNA synthetase family. Type-1 seryl-tRNA synthetase subfamily. In terms of assembly, homodimer. The tRNA molecule binds across the dimer.

The protein localises to the cytoplasm. The catalysed reaction is tRNA(Ser) + L-serine + ATP = L-seryl-tRNA(Ser) + AMP + diphosphate + H(+). It catalyses the reaction tRNA(Sec) + L-serine + ATP = L-seryl-tRNA(Sec) + AMP + diphosphate + H(+). The protein operates within aminoacyl-tRNA biosynthesis; selenocysteinyl-tRNA(Sec) biosynthesis; L-seryl-tRNA(Sec) from L-serine and tRNA(Sec): step 1/1. In terms of biological role, catalyzes the attachment of serine to tRNA(Ser). Is also able to aminoacylate tRNA(Sec) with serine, to form the misacylated tRNA L-seryl-tRNA(Sec), which will be further converted into selenocysteinyl-tRNA(Sec). The protein is Serine--tRNA ligase of Legionella pneumophila (strain Corby).